A 502-amino-acid polypeptide reads, in one-letter code: ATP synthase subunit alpha (502 aa).

169 to 176 serves as a coordination point for ATP; that stretch reads GDRQTGKT.

The protein belongs to the ATPase alpha/beta chains family. F-type ATPases have 2 components, CF(1) - the catalytic core - and CF(0) - the membrane proton channel. CF(1) has five subunits: alpha(3), beta(3), gamma(1), delta(1), epsilon(1). CF(0) has three main subunits: a(1), b(2) and c(9-12). The alpha and beta chains form an alternating ring which encloses part of the gamma chain. CF(1) is attached to CF(0) by a central stalk formed by the gamma and epsilon chains, while a peripheral stalk is formed by the delta and b chains.

The protein resides in the cell inner membrane. The catalysed reaction is ATP + H2O + 4 H(+)(in) = ADP + phosphate + 5 H(+)(out). In terms of biological role, produces ATP from ADP in the presence of a proton gradient across the membrane. The alpha chain is a regulatory subunit. This Geotalea daltonii (strain DSM 22248 / JCM 15807 / FRC-32) (Geobacter daltonii) protein is ATP synthase subunit alpha.